An 84-amino-acid polypeptide reads, in one-letter code: Small ribosomal subunit protein bS18A (84 aa).

This sequence belongs to the bacterial ribosomal protein bS18 family. As to quaternary structure, part of the 30S ribosomal subunit. Forms a tight heterodimer with protein bS6.

Binds as a heterodimer with protein bS6 to the central domain of the 16S rRNA, where it helps stabilize the platform of the 30S subunit. The protein is Small ribosomal subunit protein bS18A (rpsR1) of Mycobacterium bovis (strain ATCC BAA-935 / AF2122/97).